Here is a 614-residue protein sequence, read N- to C-terminus: UvrABC system protein C (614 aa).

The GIY-YIG domain maps to 12–89; that stretch reads DKPGVYLFRG…IKEHRPRYNV (78 aa). The UVR domain occupies 198–233; that stretch reads ADLVRGLARKMEAAAANLEFERAAELRDQLRAVEQV.

The protein belongs to the UvrC family. As to quaternary structure, interacts with UvrB in an incision complex.

It is found in the cytoplasm. In terms of biological role, the UvrABC repair system catalyzes the recognition and processing of DNA lesions. UvrC both incises the 5' and 3' sides of the lesion. The N-terminal half is responsible for the 3' incision and the C-terminal half is responsible for the 5' incision. The polypeptide is UvrABC system protein C (Desulforudis audaxviator (strain MP104C)).